Reading from the N-terminus, the 32-residue chain is Hemocyanin C chain (32 aa).

Belongs to the tyrosinase family. Hemocyanin subfamily. In terms of tissue distribution, hemolymph.

The protein resides in the secreted. Its subcellular location is the extracellular space. Hemocyanins are copper-containing oxygen carriers occurring freely dissolved in the hemolymph of many mollusks and arthropods. The sequence is that of Hemocyanin C chain from Cherax destructor (Common yabby crayfish).